A 283-amino-acid polypeptide reads, in one-letter code: DegV domain-containing protein lin2658 (283 aa).

One can recognise a DegV domain in the interval 5–282 (IAVVTDSTTY…EGALGLTWSI (278 aa)). Residues Ser-63 and Ser-96 each contribute to the hexadecanoate site.

Its function is as follows. May bind long-chain fatty acids, such as palmitate, and may play a role in lipid transport or fatty acid metabolism. The protein is DegV domain-containing protein lin2658 of Listeria innocua serovar 6a (strain ATCC BAA-680 / CLIP 11262).